We begin with the raw amino-acid sequence, 83 residues long: Large ribosomal subunit protein uL24 (83 aa).

Belongs to the universal ribosomal protein uL24 family. Part of the 50S ribosomal subunit.

Functionally, one of two assembly initiator proteins, it binds directly to the 5'-end of the 23S rRNA, where it nucleates assembly of the 50S subunit. One of the proteins that surrounds the polypeptide exit tunnel on the outside of the subunit. This chain is Large ribosomal subunit protein uL24, found in Symbiobacterium thermophilum (strain DSM 24528 / JCM 14929 / IAM 14863 / T).